The primary structure comprises 314 residues: WD repeat-containing protein 38 (314 aa).

WD repeat units lie at residues 19 to 58 (QHGG…LLWR), 61 to 100 (GHTG…CLRV), 103 to 142 (GHQR…MLRL), 145 to 184 (GHRD…PAVS), 190 to 228 (GHSA…LLIQ), 231 to 272 (GHVT…ETLK), and 274 to 312 (VLDV…PRDP). Residues 294–314 (AADQTRRQISRTSKSPRDPQT) form a disordered region.

The protein is WD repeat-containing protein 38 (WDR38) of Homo sapiens (Human).